The primary structure comprises 93 residues: Cell division protein FtsB (93 aa).

At 1–3 (MRL) the chain is on the cytoplasmic side. The chain crosses the membrane as a helical span at residues 4–21 (FILSLFALLVMFQYDFWF). Topologically, residues 22–93 (GKNGYLDYQD…FYRIVKNKNR (72 aa)) are periplasmic. Residues 28–76 (DYQDIKAEIIQRKQENKKLSQRNQTIFAEIQDLKNGIEAIEERARMEHE) are a coiled coil.

Belongs to the FtsB family. As to quaternary structure, part of a complex composed of FtsB, FtsL and FtsQ.

It localises to the cell inner membrane. Functionally, essential cell division protein. May link together the upstream cell division proteins, which are predominantly cytoplasmic, with the downstream cell division proteins, which are predominantly periplasmic. This chain is Cell division protein FtsB, found in Histophilus somni (strain 129Pt) (Haemophilus somnus).